Here is a 307-residue protein sequence, read N- to C-terminus: MNYLEFEVIWGVNNIYSILELKSKLIYEGIFKGKILETGCKEYSPLVPGDIVLGYVYGSRKVYIDKRVSRKNILWRYNRKVDLRQAIVSNVDNVLIVNSANFPEMKNFFIDRVLVVAEEQNIVPVIVINKIDKGISQRVEEFSEIYKNLGYRVLKTSVKTFEGIKEVKEILRNSRTSFIGQSGVGKSSLINLIDSRASQSVNEISEKYSRGKHTTVYSISFHSENWIIVDTPGIKEFGVETLPFENLKYYFKEFENFASFCKYKSCLHVSEPHCSVTNSLGNGISKPRYESYLKILSELKNYKNYAK.

Residues Lys80–Phe237 form the CP-type G domain. GTP is bound by residues Asn129–Asp132 and Gly180–Ser188. Cys261, Cys266, His268, and Cys274 together coordinate Zn(2+).

Belongs to the TRAFAC class YlqF/YawG GTPase family. RsgA subfamily. Monomer. Associates with 30S ribosomal subunit, binds 16S rRNA. It depends on Zn(2+) as a cofactor.

It is found in the cytoplasm. In terms of biological role, one of several proteins that assist in the late maturation steps of the functional core of the 30S ribosomal subunit. Helps release RbfA from mature subunits. May play a role in the assembly of ribosomal proteins into the subunit. Circularly permuted GTPase that catalyzes slow GTP hydrolysis, GTPase activity is stimulated by the 30S ribosomal subunit. The sequence is that of Small ribosomal subunit biogenesis GTPase RsgA from Borrelia garinii subsp. bavariensis (strain ATCC BAA-2496 / DSM 23469 / PBi) (Borreliella bavariensis).